Reading from the N-terminus, the 278-residue chain is Orotidine 5'-phosphate decarboxylase (278 aa).

Lysine 95 functions as the Proton donor in the catalytic mechanism.

Belongs to the OMP decarboxylase family. Type 2 subfamily.

It carries out the reaction orotidine 5'-phosphate + H(+) = UMP + CO2. The protein operates within pyrimidine metabolism; UMP biosynthesis via de novo pathway; UMP from orotate: step 2/2. This Corynebacterium glutamicum (strain R) protein is Orotidine 5'-phosphate decarboxylase.